The following is a 533-amino-acid chain: Calcitonin receptor (533 aa).

The signal sequence occupies residues 1–41 (MTPRRSRVKRRNLRKPKMRFLLVNRFTLLLLLLVSPTPVLQ). At 42–163 (APTNLTDSGL…FTSEKLQNAY (122 aa)) the chain is on the extracellular side. 4 N-linked (GlcNAc...) asparagine glycosylation sites follow: Asn45, Asn90, Asn142, and Asn147. Disulfide bonds link Cys72–Cys98, Cys89–Cys129, and Cys112–Cys151. Residues 164-186 (VLYYLALVGHSLSIAALVASMLI) traverse the membrane as a helical segment. Over 187 to 198 (FWIFKNLSCQRV) the chain is Cytoplasmic. The helical transmembrane segment at 199 to 219 (TLHKHMFLTYILNSIIIIIHL) threads the bilayer. Topologically, residues 220-273 (VEVVPNGDLVRRDPMHIFHHNTHMWTMQWELSPPLPLSAHEGKMDPHASEVISC) are extracellular. Cys273 and Cys343 are oxidised to a cystine. A helical transmembrane segment spans residues 274–296 (KVLHFLHQYMMSCNYFWMLCEGI). Residues 297–313 (YLHTLIVMAVFTDEQRL) lie on the Cytoplasmic side of the membrane. The chain crosses the membrane as a helical span at residues 314–334 (RWYYLLGWGFPIVPTIIHAIT). Topologically, residues 335–350 (RALYYNDNCWLSAETH) are extracellular. The helical transmembrane segment at 351–374 (LLYIIHGPVMVALVVNFFFLLNIV) threads the bilayer. Topologically, residues 375-394 (RVLVTKMRQTHEAESYMYLK) are cytoplasmic. The chain crosses the membrane as a helical span at residues 395 to 413 (AVKATMVLVPLLGIQFVVF). Over 414 to 421 (PWRPSNKV) the chain is Extracellular. The helical transmembrane segment at 422 to 448 (LGKIYDYLMHSLIHFQGFFVATIYCFC) threads the bilayer. Over 449 to 533 (NHEVQVTLKR…MNVIQQDASA (85 aa)) the chain is Cytoplasmic.

The protein belongs to the G-protein coupled receptor 2 family. In terms of assembly, heterodimer of CALCR and RAMP1, RAMP2 or RAMP3; the receptor complexes function as AMYR1, AMYR2 and AMYR3 receptors, respectively, and respond to amylin/IAPP, calcitonin/CT and CGRP1 ligands. Interacts with GPRASP2.

It is found in the cell membrane. G protein-coupled receptor activated by ligand peptides amylin (IAPP), calcitonin (CT/CALCA) and calcitonin gene-related peptide type 1 (CGRP1/CALCA). CALCR interacts with receptor-activity-modifying proteins RAMP1, 2 and 3 to form receptor complexes AMYR1, 2 and 3, respectively. IAPP, CT and CGRP1 activate CALCR and AMYRs with distinct modes of receptor activation resulting in specific phenotypes. Ligand binding causes a conformation change that triggers signaling via guanine nucleotide-binding proteins (G proteins) and modulates the activity of downstream effectors. Activates cAMP-dependent pathway. In Mus musculus (Mouse), this protein is Calcitonin receptor.